We begin with the raw amino-acid sequence, 483 residues long: MEFETVIGLEVHAQLLTRSKMFCGCSADYAGAPPNTHVCPVCLGLPGSLPVINRRAVEMTVMTGLALGCRIPPYSKFDRKNYMYPDLPKGYQISQYDLPLCVDGALEFLVDGQRRRVRIRRVHLEEDTARLVHRTVAGESYSLVDMNRSGVPLIEIVTEPDLHSPEEARLFLQSLRQVLRYLGVSTGNMEEGAFRCDANISQRTVDGQQQWPKAEIKNLNSFRSVERALAYEEQRQRAAIRRGERLVQETRGWLEDQGITVTQRAKEYPDDYRYFPEPDLPPIFLTEDDLARIRAAMPELPLARWERFQVEYGLGPQEAALLTEERAVADFFEACVAGDRTLAREAANWITGELFALMRERGCGISEVGVQPRQLRQLIELVQRGTISTLTAKELLGAVSETGTDPEVLVAERGLAQVSDEAQLRAIVQRVLAENPKAVADYRKGKTAAIGFLLGQVNRALAGRANPAVARRLLEEALQQPVE.

This sequence belongs to the GatB/GatE family. GatB subfamily. Heterotrimer of A, B and C subunits.

It catalyses the reaction L-glutamyl-tRNA(Gln) + L-glutamine + ATP + H2O = L-glutaminyl-tRNA(Gln) + L-glutamate + ADP + phosphate + H(+). The catalysed reaction is L-aspartyl-tRNA(Asn) + L-glutamine + ATP + H2O = L-asparaginyl-tRNA(Asn) + L-glutamate + ADP + phosphate + 2 H(+). In terms of biological role, allows the formation of correctly charged Asn-tRNA(Asn) or Gln-tRNA(Gln) through the transamidation of misacylated Asp-tRNA(Asn) or Glu-tRNA(Gln) in organisms which lack either or both of asparaginyl-tRNA or glutaminyl-tRNA synthetases. The reaction takes place in the presence of glutamine and ATP through an activated phospho-Asp-tRNA(Asn) or phospho-Glu-tRNA(Gln). The sequence is that of Aspartyl/glutamyl-tRNA(Asn/Gln) amidotransferase subunit B from Thermomicrobium roseum (strain ATCC 27502 / DSM 5159 / P-2).